Here is a 514-residue protein sequence, read N- to C-terminus: 2,3-bisphosphoglycerate-independent phosphoglycerate mutase (514 aa).

Residues Asp-14 and Ser-64 each coordinate Mn(2+). Ser-64 acts as the Phosphoserine intermediate in catalysis. Residues His-125, 155 to 156 (RD), Arg-187, Arg-193, 263 to 266 (RADR), and Lys-336 contribute to the substrate site. Mn(2+) is bound by residues Asp-403, His-407, Asp-444, His-445, and His-463.

The protein belongs to the BPG-independent phosphoglycerate mutase family. As to quaternary structure, monomer. Mn(2+) is required as a cofactor.

The catalysed reaction is (2R)-2-phosphoglycerate = (2R)-3-phosphoglycerate. The protein operates within carbohydrate degradation; glycolysis; pyruvate from D-glyceraldehyde 3-phosphate: step 3/5. In terms of biological role, catalyzes the interconversion of 2-phosphoglycerate and 3-phosphoglycerate. The sequence is that of 2,3-bisphosphoglycerate-independent phosphoglycerate mutase from Shewanella denitrificans (strain OS217 / ATCC BAA-1090 / DSM 15013).